The sequence spans 858 residues: Conidiophore development regulator abaA (858 aa).

The disordered stretch occupies residues methionine 1 to aspartate 22. Residues glutamine 128 to leucine 221 constitute a DNA-binding region (TEA). A compositionally biased stretch (basic and acidic residues) spans valine 500–glycine 522. Disordered regions lie at residues valine 500–alanine 535 and threonine 792–tryptophan 858. A Nuclear localization signal motif is present at residues aspartate 514 to alanine 521. Polar residues predominate over residues serine 809–alanine 822.

Belongs to the TEC1 family.

The protein localises to the nucleus. Functionally, abaA and wetA are pivotal regulators of conidiophore development and conidium maturation. They act individually and together to regulate their own expression and that of numerous other sporulation-specific genes. Binds to the sequence 5'-CATTCY-3', where Y is a pyrimidine, making both major- and minor-groove contacts. Plays a pivotal role in conidiation by regulating cell cycle pathways and other conidiation-related genes. The protein is Conidiophore development regulator abaA of Gibberella zeae (strain ATCC MYA-4620 / CBS 123657 / FGSC 9075 / NRRL 31084 / PH-1) (Wheat head blight fungus).